An 847-amino-acid chain; its full sequence is E4 SUMO-protein ligase PIAL1 (847 aa).

The tract at residues 113–271 (VNSPVTLISQ…EVVGSNSDCD (159 aa)) is interacting domain (IND), required for interaction with MOM1 and PIAL2. Residues 268-349 (SDCDIIEGPS…LRKILEEVGR (82 aa)) form an SP-RING-type zinc finger. Positions 299, 301, 322, and 325 each coordinate Zn(2+). A run of 7 repeats spans residues 569-591 (QRPV…ENAD), 592-614 (QRWM…GNTN), 615-637 (QRPI…GNTD), 638-659 (HRST…GNAD), 660-682 (QRPM…GYAH), 683-705 (QRPM…GTPD), and 706-728 (QRPM…GTTD). Residues 569 to 728 (QRPVPSYIAH…LPVSYGGTTD (160 aa)) are 7 X 23 AA approximate tandem repeats.

This sequence belongs to the PIAL protein ligase family. In terms of assembly, homodimer. Interacts with MOM1 and PIAL2 to form a high molecular mass complex which mediates transcriptional gene silencing at heterochromatin regions. As to expression, expressed in leaves, stems and flowers, and, at low levels, in siliques and old leaves.

It is found in the nucleus. It functions in the pathway protein modification; protein sumoylation. In terms of biological role, together with MOM1 and PIAL2, regulates transcriptional gene silencing (TGS) independently of changes in DNA methylation. E4-type SUMO ligase that promotes SUMO chain formation in a SCE1-dependent manner and thus contributes to a pathway for proteolytic removal of sumoylation substrates. Involved in stress responses (e.g. osmotic, salt and abscisic acid ABA) and sulfur metabolism. This chain is E4 SUMO-protein ligase PIAL1, found in Arabidopsis thaliana (Mouse-ear cress).